A 369-amino-acid chain; its full sequence is UDP-3-O-(3-hydroxymyristoyl)glucosamine N-acyltransferase (369 aa).

The Proton acceptor role is filled by His240.

The protein belongs to the transferase hexapeptide repeat family. LpxD subfamily. In terms of assembly, homotrimer.

It catalyses the reaction a UDP-3-O-[(3R)-3-hydroxyacyl]-alpha-D-glucosamine + a (3R)-hydroxyacyl-[ACP] = a UDP-2-N,3-O-bis[(3R)-3-hydroxyacyl]-alpha-D-glucosamine + holo-[ACP] + H(+). The enzyme catalyses UDP-3-O-[(3R)-3-hydroxytetradecanoyl]-alpha-D-glucosamine + (3R)-hydroxytetradecanoyl-[ACP] = UDP-2-N,3-O-bis[(3R)-3-hydroxytetradecanoyl]-alpha-D-glucosamine + holo-[ACP] + H(+). The protein operates within glycolipid biosynthesis; lipid IV(A) biosynthesis; lipid IV(A) from (3R)-3-hydroxytetradecanoyl-[acyl-carrier-protein] and UDP-N-acetyl-alpha-D-glucosamine: step 3/6. Its function is as follows. Catalyzes the N-acylation of UDP-3-O-(hydroxytetradecanoyl)glucosamine using 3-hydroxytetradecanoyl-ACP as the acyl donor. Is involved in the biosynthesis of lipid A, a phosphorylated glycolipid that anchors the lipopolysaccharide to the outer membrane of the cell. The polypeptide is UDP-3-O-(3-hydroxymyristoyl)glucosamine N-acyltransferase (Blochmanniella floridana).